The chain runs to 322 residues: 4-diphosphocytidyl-2-C-methyl-D-erythritol kinase (322 aa).

K25 is a catalytic residue. 110-120 provides a ligand contact to ATP; it reads PVAGGMAGGSA. D152 is an active-site residue.

It belongs to the GHMP kinase family. IspE subfamily.

The enzyme catalyses 4-CDP-2-C-methyl-D-erythritol + ATP = 4-CDP-2-C-methyl-D-erythritol 2-phosphate + ADP + H(+). Its pathway is isoprenoid biosynthesis; isopentenyl diphosphate biosynthesis via DXP pathway; isopentenyl diphosphate from 1-deoxy-D-xylulose 5-phosphate: step 3/6. Functionally, catalyzes the phosphorylation of the position 2 hydroxy group of 4-diphosphocytidyl-2C-methyl-D-erythritol. The chain is 4-diphosphocytidyl-2-C-methyl-D-erythritol kinase from Mycolicibacterium vanbaalenii (strain DSM 7251 / JCM 13017 / BCRC 16820 / KCTC 9966 / NRRL B-24157 / PYR-1) (Mycobacterium vanbaalenii).